The sequence spans 466 residues: Ribulose bisphosphate carboxylase large chain (466 aa).

An N6,N6,N6-trimethyllysine modification is found at Lys-5. 2 residues coordinate substrate: Asn-114 and Thr-164. Residue Lys-166 is the Proton acceptor of the active site. Lys-168 serves as a coordination point for substrate. Mg(2+)-binding residues include Lys-192, Asp-194, and Glu-195. Lys-192 is subject to N6-carboxylysine. His-285 serves as the catalytic Proton acceptor. The substrate site is built by Arg-286, His-318, and Ser-370.

The protein belongs to the RuBisCO large chain family. Type I subfamily. As to quaternary structure, heterohexadecamer of 8 large chains and 8 small chains; disulfide-linked. The disulfide link is formed within the large subunit homodimers. The cofactor is Mg(2+). In terms of processing, the disulfide bond which can form in the large chain dimeric partners within the hexadecamer appears to be associated with oxidative stress and protein turnover.

It is found in the plastid. Its subcellular location is the chloroplast. It carries out the reaction 2 (2R)-3-phosphoglycerate + 2 H(+) = D-ribulose 1,5-bisphosphate + CO2 + H2O. The enzyme catalyses D-ribulose 1,5-bisphosphate + O2 = 2-phosphoglycolate + (2R)-3-phosphoglycerate + 2 H(+). Functionally, ruBisCO catalyzes two reactions: the carboxylation of D-ribulose 1,5-bisphosphate, the primary event in carbon dioxide fixation, as well as the oxidative fragmentation of the pentose substrate in the photorespiration process. Both reactions occur simultaneously and in competition at the same active site. The polypeptide is Ribulose bisphosphate carboxylase large chain (Isophysis tasmanica).